A 967-amino-acid polypeptide reads, in one-letter code: Sulfite dehydrogenase subunit A (967 aa).

Residues 15 to 71 (VEVKETTCYMCACRCGIRVHLRDGEVRYIDGNPNHPLNKGVICAKGSSGIMKQYSPG) form the 4Fe-4S Mo/W bis-MGD-type domain. Residues Cys-22, Cys-25, Cys-29, and Cys-57 each contribute to the [4Fe-4S] cluster site.

This sequence belongs to the prokaryotic molybdopterin-containing oxidoreductase family. As to quaternary structure, forms a heterotrimeric membrane-bound complex composed of a catalytic heterodimer (SoeAB) and a membrane anchor protein (SoeC). Requires [4Fe-4S] cluster as cofactor. It depends on Mo-bis(molybdopterin guanine dinucleotide) as a cofactor.

It localises to the cell inner membrane. The catalysed reaction is a quinone + sulfite + H2O = a quinol + sulfate. It catalyses the reaction a menaquinone + sulfite + H2O = a menaquinol + sulfate. Its function is as follows. Part of the SoeABC complex that catalyzes the oxidation of sulfite to sulfate. The sequence is that of Sulfite dehydrogenase subunit A from Allochromatium vinosum (strain ATCC 17899 / DSM 180 / NBRC 103801 / NCIMB 10441 / D) (Chromatium vinosum).